The sequence spans 210 residues: Na(+)-translocating NADH-quinone reductase subunit D (210 aa).

The next 6 helical transmembrane spans lie at 14–34, 42–62, 72–92, 103–123, 131–151, and 178–198; these read PIIS…ALAV, LVMT…ISMI, IIVQ…VLQA, VFVG…AYAM, FMDG…VGFV, and NGLL…IWII.

This sequence belongs to the NqrDE/RnfAE family. Composed of six subunits; NqrA, NqrB, NqrC, NqrD, NqrE and NqrF.

It is found in the cell inner membrane. The enzyme catalyses a ubiquinone + n Na(+)(in) + NADH + H(+) = a ubiquinol + n Na(+)(out) + NAD(+). Functionally, NQR complex catalyzes the reduction of ubiquinone-1 to ubiquinol by two successive reactions, coupled with the transport of Na(+) ions from the cytoplasm to the periplasm. NqrA to NqrE are probably involved in the second step, the conversion of ubisemiquinone to ubiquinol. The protein is Na(+)-translocating NADH-quinone reductase subunit D of Shewanella loihica (strain ATCC BAA-1088 / PV-4).